The primary structure comprises 553 residues: Effector protein HopAB2 (553 aa).

Disordered regions lie at residues 1-123 (MAGI…APRR), 198-227 (AVHQ…GSSQ), and 239-275 (APNQ…AAMR). Residues 1–308 (MAGINRAGPS…LRTALERHVM (308 aa)) form a host recognition; Pto interaction region. A compositionally biased stretch (low complexity) spans 24–39 (SGQAHGSGSGASSSNS). A compositionally biased stretch (pro residues) spans 47–60 (SNTPPSNAPAPPPT). Residues 217-227 (SPAASSSGSSQ) show a composition bias toward low complexity. The segment covering 242–255 (QGRSSNTAASQTPV) has biased composition (polar residues). The tract at residues 309 to 553 (QRLPIPLDIG…IAKYAFRIVP (245 aa)) is E3 ubiquitin-protein ligase. The short motif at 325-328 (GINP) is the Interaction with Pto-kinase element. A disordered region spans residues 361–380 (APRPAVPVAPATASRRPDGT). The segment at 512–529 (KDLAFMDMKKLAQFLAGK) is required for E3 ubiquitin-protein ligase and anti-PCD activities and pathogenesis.

This sequence belongs to the HopAB family. Interacts physically with plant cell Pto. In terms of processing, auto-ubiquitinated.

Its subcellular location is the secreted. Functionally, effector protein involved in gene-for-gene resistance in tomato plants. It is recognized by the host Pto resistance protein and elicits Pto and Prf-dependent hypersensitive response (HR) and programmed cell death (PCD), resulting in host immunity. In susceptible plants, acts as a virulence factor by suppressing PCD and HR-based plant immunity. This function requires its E3 ubiquitin ligase activity probably by recruiting E2 enzymes and transferring ubiquitin molecules to cellular proteins involved in regulation of PCD and targeting them for degradation. Also, induces expression of host genes involved in ethylene biosynthesis and signaling, in particular ACO1 and ACO2, encoding the ethylene-forming enzyme ACC oxidase. The sequence is that of Effector protein HopAB2 (hopAB2) from Pseudomonas syringae pv. tomato (strain ATCC BAA-871 / DC3000).